Reading from the N-terminus, the 199-residue chain is Superoxide dismutase [Cu-Zn] (199 aa).

The first 22 residues, 1-22 (MKLTKVALFSLGLFGFSSMALA), serve as a signal peptide directing secretion. Positions 92, 94, and 117 each coordinate Cu cation. Cys-99 and Cys-195 form a disulfide bridge. Residues His-117, His-126, His-135, and Asp-138 each contribute to the Zn(2+) site. His-173 is a Cu cation binding site.

This sequence belongs to the Cu-Zn superoxide dismutase family. In terms of assembly, homodimer. Cu cation is required as a cofactor. Requires Zn(2+) as cofactor.

It is found in the periplasm. The enzyme catalyses 2 superoxide + 2 H(+) = H2O2 + O2. Functionally, destroys radicals which are normally produced within the cells and which are toxic to biological systems. May play a role in the interactive biology of organisms with their hosts and so contribute to their capacity to cause disease. This chain is Superoxide dismutase [Cu-Zn] (sodC), found in Haemophilus ducreyi (strain 35000HP / ATCC 700724).